The chain runs to 49 residues: MAVPKRRVSKTRAAKRRSHYKIALAKPIKDKDGSWKMPHHINKFTGSYK.

Belongs to the bacterial ribosomal protein bL32 family.

This Helicobacter hepaticus (strain ATCC 51449 / 3B1) protein is Large ribosomal subunit protein bL32.